The sequence spans 425 residues: Na(+)/H(+) antiporter NhaA 1 (425 aa).

The next 11 helical transmembrane spans lie at 20–40 (AGGV…NSPL), 65–85 (PHLW…GLEI), 102–122 (LPFI…LAVT), 131–151 (GWAI…ALLG), 160–180 (LFLT…IALA), 183–203 (ASIK…MMAM), 218–238 (FVLL…AGVL), 272–292 (FLIV…GFSL), 303–323 (IAAG…WAAV), 342–362 (LSVL…LAFA), and 373–393 (LGVI…LRFA).

The protein belongs to the NhaA Na(+)/H(+) (TC 2.A.33) antiporter family.

The protein localises to the cell inner membrane. It carries out the reaction Na(+)(in) + 2 H(+)(out) = Na(+)(out) + 2 H(+)(in). Functionally, na(+)/H(+) antiporter that extrudes sodium in exchange for external protons. In Novosphingobium aromaticivorans (strain ATCC 700278 / DSM 12444 / CCUG 56034 / CIP 105152 / NBRC 16084 / F199), this protein is Na(+)/H(+) antiporter NhaA 1.